Consider the following 310-residue polypeptide: Glutaminase 1 (310 aa).

Substrate-binding residues include Ser66, Asn117, Glu161, Asn168, Tyr192, Tyr244, and Val262. Lys294 carries the post-translational modification N6-acetyllysine.

Belongs to the glutaminase family. As to quaternary structure, homotetramer.

The catalysed reaction is L-glutamine + H2O = L-glutamate + NH4(+). The chain is Glutaminase 1 from Escherichia coli O6:H1 (strain CFT073 / ATCC 700928 / UPEC).